The following is a 231-amino-acid chain: dTTP/UTP pyrophosphatase (231 aa).

Asp81 functions as the Proton acceptor in the catalytic mechanism.

The protein belongs to the Maf family. YhdE subfamily. The cofactor is a divalent metal cation.

The protein localises to the cytoplasm. It carries out the reaction dTTP + H2O = dTMP + diphosphate + H(+). It catalyses the reaction UTP + H2O = UMP + diphosphate + H(+). Functionally, nucleoside triphosphate pyrophosphatase that hydrolyzes dTTP and UTP. May have a dual role in cell division arrest and in preventing the incorporation of modified nucleotides into cellular nucleic acids. In Lawsonia intracellularis (strain PHE/MN1-00), this protein is dTTP/UTP pyrophosphatase.